The sequence spans 546 residues: Probable zinc metalloprotease EGY2, chloroplastic (546 aa).

The transit peptide at 1–64 directs the protein to the chloroplast; the sequence is MQLPAMSCSP…QIRNRRFVCQ (64 aa). Residues 67–143 form a disordered region; the sequence is TETEPDGDGN…DATPASDAQE (77 aa). Residues 69–86 are compositionally biased toward acidic residues; the sequence is TEPDGDGNGDEEKEELGD. 2 stretches are compositionally biased toward polar residues: residues 89–110 and 118–130; these read SSPS…TNAD and NTEP…TVQN. The next 7 helical transmembrane spans lie at 257 to 277, 301 to 321, 326 to 346, 364 to 384, 427 to 447, 474 to 494, and 514 to 534; these read AVPE…TLLL, VYGA…HILA, GIKL…FGAI, AAGP…GFIL, PLVL…IPAG, LLGI…LIFF, and YISI…PYPF.

It belongs to the peptidase M50B family.

Its subcellular location is the plastid. It is found in the chloroplast membrane. Its function is as follows. Probable membrane-associated metalloprotease that may be involved in chloroplast development. In Oryza sativa subsp. japonica (Rice), this protein is Probable zinc metalloprotease EGY2, chloroplastic (EGY2).